The sequence spans 440 residues: T-box transcription factor TBX20 (440 aa).

A DNA-binding region (T-box) is located at residues 103 to 282; the sequence is LWDKFHDLGT…SNPFAKGFRD (180 aa).

The protein localises to the nucleus. Functionally, transcriptional regulator that may be involved in heart developmental processes. This chain is T-box transcription factor TBX20 (tbx20), found in Xenopus tropicalis (Western clawed frog).